A 67-amino-acid chain; its full sequence is Large ribosomal subunit protein uL29 (67 aa).

This sequence belongs to the universal ribosomal protein uL29 family.

The polypeptide is Large ribosomal subunit protein uL29 (Ehrlichia canis (strain Jake)).